The following is a 135-amino-acid chain: Sex-regulated protein janus-A (135 aa).

Position 37 (K37) interacts with substrate. The Proton acceptor role is filled by H63. 104 to 106 (SQG) serves as a coordination point for substrate.

The protein belongs to the janus family.

JanA and janB regulate somatic sex differentiation. In Drosophila simulans (Fruit fly), this protein is Sex-regulated protein janus-A (janA).